A 345-amino-acid chain; its full sequence is Homeobox protein DBX1 (345 aa).

2 disordered regions span residues 55–103 (PRGS…VSPA) and 241–345 (KERE…ITVS). The homeobox DNA-binding region spans 182–241 (GMLRRAVFSDVQRKALEKMFQKQKYISKPDRKKLAAKLGLKDSQVKIWFQNRRMKWRNSK). Positions 300-309 (DPRHLRDPRL) are enriched in basic and acidic residues. A compositionally biased stretch (acidic residues) spans 330–345 (SDSEDDEEGEEEITVS).

This sequence belongs to the H2.0 homeobox family.

It localises to the nucleus. In terms of biological role, could have a role in patterning the central nervous system during embryogenesis. Has a key role in regulating the distinct phenotypic features that distinguish two major classes of ventral interneurons, V0 and V1 neurons. Regulates the transcription factor profile, neurotransmitter phenotype, intraspinal migratory path and axonal trajectory of V0 neurons, features that differentiate them from an adjacent set of V1 neurons. The protein is Homeobox protein DBX1 (DBX1) of Bos taurus (Bovine).